We begin with the raw amino-acid sequence, 61 residues long: DNA-directed RNA polymerase subunit Rpo6 (61 aa).

This sequence belongs to the archaeal Rpo6/eukaryotic RPB6 RNA polymerase subunit family. Part of the RNA polymerase complex.

It is found in the cytoplasm. It carries out the reaction RNA(n) + a ribonucleoside 5'-triphosphate = RNA(n+1) + diphosphate. Its function is as follows. DNA-dependent RNA polymerase (RNAP) catalyzes the transcription of DNA into RNA using the four ribonucleoside triphosphates as substrates. This is DNA-directed RNA polymerase subunit Rpo6 from Thermoplasma volcanium (strain ATCC 51530 / DSM 4299 / JCM 9571 / NBRC 15438 / GSS1).